The primary structure comprises 684 residues: G-protein-signaling modulator 2 (684 aa).

Positions 22 to 357 are important for interaction with NUMA1; INSC and FRMPD1; it reads ASCLELALEG…HLEISREVGD (336 aa). 8 TPR repeats span residues 24–57, 62–95, 102–135, 142–184, 202–235, 242–275, 282–315, and 322–355; these read CLEL…GTED, SAIY…ARTI, AKAS…SREL, ARAL…AVDF, GRAF…AKEF, RRAY…ARQL, AQSC…AQEL, and GRAC…SREV. Ser132 is modified (phosphoserine; by PKG). At Ser352 the chain carries Phosphoserine; by PKG. Phosphoserine occurs at positions 408 and 483. At Thr486 the chain carries Phosphothreonine. One can recognise a GoLoco 1 domain in the interval 489–511; that stretch reads DEGFFDLLSRFQSNRMDDQRCCL. Ser501 bears the Phosphoserine; by PKC mark. Residues Ser541 and Ser565 each carry the phosphoserine modification. 3 consecutive GoLoco domains span residues 544 to 566, 594 to 616, and 628 to 650; these read TDEF…RASF, DEDF…RCAP, and DEDF…RVLL. Residue Ser607 is modified to Phosphoserine; by PKG. Residues Arg608, Arg613, Arg642, and Arg647 each contribute to the GDP site.

This sequence belongs to the GPSM family. In terms of assembly, interacts with the dynein-dynactin complex; this interaction is inhibited in a PLK1-dependent manner. Part of a spindle orientation complex at least composed of GNAI1, GPSM2 and NUMA1. Interacts with LLGL2. Interacts (via TPR repeat region) with INSC/inscuteable. Interacts (via TPR repeat region) with NUMA1 (via C-terminus); this interaction is direct, inhibited in a PLK1-dependent manner, prevents the binding of NUMA1 with SPAG5 and promotes spindle pole organization. INSC and NUMA1 compete for the same binding site, but INSC has higher affinity and can displace NUMA1 (in vitro). Interacts with GNAI2. Interacts (via GoLoco domains) with the GDP-bound form of GNAI1 and GNAI3; has much lower affinity for the GTP-bound form. Interaction with GDP-bound GNAI3 strongly enhances the affinity for NUMA1. Interacts (via TPR repeat region) with FRMPD1. INSC and FRMPD1 compete for the same binding site, but INSC has higher affinity and can displace FRMPD1 (in vitro). Interacts (via TPR repeat region) with FRMPD4. Identified in a complex with INSC and F2RL2/Par3. Interacts with TASOR. Ubiquitously expressed.

It localises to the cytoplasm. The protein resides in the cell cortex. The protein localises to the cytoskeleton. It is found in the spindle pole. Its subcellular location is the lateral cell membrane. Plays an important role in mitotic spindle pole organization via its interaction with NUMA1. Required for cortical dynein-dynactin complex recruitment during metaphase. Plays a role in metaphase spindle orientation. Also plays an important role in asymmetric cell divisions. Has guanine nucleotide dissociation inhibitor (GDI) activity towards G(i) alpha proteins, such as GNAI1 and GNAI3, and thereby regulates their activity. This chain is G-protein-signaling modulator 2 (GPSM2), found in Homo sapiens (Human).